We begin with the raw amino-acid sequence, 125 residues long: MRHGKTGRKLGRTSSHRTAMLRNMVTSFLRYESVKTTDTRAKELRKLAEKMITLGKRGDVHARRQALAVVRDRAVVTKIFNELAERYRDRPGGYTRIIKAGYREGDSAPISIIECVRDISGTQSK.

It belongs to the bacterial ribosomal protein bL17 family. As to quaternary structure, part of the 50S ribosomal subunit. Contacts protein L32.

The protein is Large ribosomal subunit protein bL17 of Syntrophus aciditrophicus (strain SB).